The chain runs to 465 residues: UPF0324 membrane protein CC_0425 (465 aa).

Residues 97 to 132 (HRQPDRAPPARASEQPLRQGRRALRRRPDQRRHRPR) are disordered. Residues 115–132 (QGRRALRRRPDQRRHRPR) are compositionally biased toward basic residues. 10 helical membrane passes run 135-157 (AAAL…LMAV), 172-194 (LLAV…GAGL), 219-241 (AALG…GIGA), 251-273 (LAEA…LAAS), 286-308 (TALV…PPIA), 318-340 (AGVF…ASVS), 352-374 (LSRI…RTAQ), 378-400 (ISGL…ARGL), 405-427 (PALV…GAIS), and 442-464 (LAIL…TRIF).

Belongs to the UPF0324 family.

Its subcellular location is the cell membrane. This chain is UPF0324 membrane protein CC_0425, found in Caulobacter vibrioides (strain ATCC 19089 / CIP 103742 / CB 15) (Caulobacter crescentus).